The primary structure comprises 418 residues: Glutamyl-tRNA reductase (418 aa).

Residues 49–52 (TCNR), serine 109, 114–116 (EPQ), and glutamine 120 each bind substrate. Cysteine 50 (nucleophile) is an active-site residue. 189–194 (GAGETI) contacts NADP(+).

It belongs to the glutamyl-tRNA reductase family. In terms of assembly, homodimer.

The catalysed reaction is (S)-4-amino-5-oxopentanoate + tRNA(Glu) + NADP(+) = L-glutamyl-tRNA(Glu) + NADPH + H(+). It functions in the pathway porphyrin-containing compound metabolism; protoporphyrin-IX biosynthesis; 5-aminolevulinate from L-glutamyl-tRNA(Glu): step 1/2. Its function is as follows. Catalyzes the NADPH-dependent reduction of glutamyl-tRNA(Glu) to glutamate 1-semialdehyde (GSA). This chain is Glutamyl-tRNA reductase, found in Shigella dysenteriae serotype 1 (strain Sd197).